A 49-amino-acid chain; its full sequence is Large ribosomal subunit protein bL33B (49 aa).

It belongs to the bacterial ribosomal protein bL33 family.

The sequence is that of Large ribosomal subunit protein bL33B from Lactobacillus helveticus (strain DPC 4571).